The sequence spans 114 residues: Probable 4-amino-4-deoxy-L-arabinose-phosphoundecaprenol flippase subunit ArnE (114 aa).

The next 3 membrane-spanning stretches (helical) occupy residues 38–58 (LTLRWLAIAVVSLGLGMLLWL), 64–84 (LPLSVAYPMLSFNFVLVTLAA), and 94–114 (LRHWLGVAAIMFGILLMSWHL). The region spanning 43-112 (LAIAVVSLGL…IMFGILLMSW (70 aa)) is the EamA domain.

It belongs to the ArnE family. Heterodimer of ArnE and ArnF.

The protein localises to the cell inner membrane. The protein operates within bacterial outer membrane biogenesis; lipopolysaccharide biosynthesis. Translocates 4-amino-4-deoxy-L-arabinose-phosphoundecaprenol (alpha-L-Ara4N-phosphoundecaprenol) from the cytoplasmic to the periplasmic side of the inner membrane. This Yersinia pseudotuberculosis serotype O:3 (strain YPIII) protein is Probable 4-amino-4-deoxy-L-arabinose-phosphoundecaprenol flippase subunit ArnE.